The following is a 570-amino-acid chain: FERM domain-containing protein 5 (570 aa).

The 282-residue stretch at 17–298 folds into the FERM domain; the sequence is YSCTVRLLDD…ENQAFYKLEK (282 aa). Residues 308 to 353 form an interaction with ROCK1 region; it reads SNLFFKGSRFRYSGRVAKEVMESSAKIKREPPEIHRAGMVPSRSCP. Residues 344 to 367 form a disordered region; the sequence is AGMVPSRSCPSITHGPRLSSVPRT. At S375 the chain carries Phosphoserine. The tract at residues 385-407 is disordered; it reads DSAHSTPVRSTSHGDTFLPHVRS. Positions 388–398 are enriched in polar residues; that stretch reads HSTPVRSTSHG. The helical transmembrane segment at 504–524 threads the bilayer; that stretch reads LLLVTMGLLFVLLLLLIILTE.

In terms of assembly, interacts with CTNND1. Interacts with ITGB5 (via cytoplasmic domain) and ROCK1.

It localises to the membrane. It is found in the cell junction. The protein localises to the adherens junction. May be involved in regulation of cell migration. May regulate cell-matrix interactions via its interaction with ITGB5 and modifying ITGB5 cytoplasmic tail interactions such as with FERMT2 and TLN1. May regulate ROCK1 kinase activity possibly involved in regulation of actin stress fiber formation. The protein is FERM domain-containing protein 5 (FRMD5) of Homo sapiens (Human).